Reading from the N-terminus, the 87-residue chain is Large ribosomal subunit protein bL27 (87 aa).

Residues 1–25 are disordered; the sequence is MAHKKGASSSRNGRDSNAQRLGVKR. Residues 7–19 show a composition bias toward polar residues; that stretch reads ASSSRNGRDSNAQ.

The protein belongs to the bacterial ribosomal protein bL27 family.

This Rhodococcus jostii (strain RHA1) protein is Large ribosomal subunit protein bL27.